The sequence spans 560 residues: MNIDVVHLLEQNPILLIFVVLAIGLAFGKIRFGKLQLGNSIGVLITSLVMGHLGFSFNAEALTIGFMLFIYCVGIEAGPNFFGIFFRDGKHYFILSMTVLVSAVGLTYFCSHYMGLDFGLSAGMMAGALTATPVLVGAQDALNSGLATIPRNMDFSLVLENLSVGYAMAYLVGLISMIMFAKLLPKLQKQNLSDSAQQIAQERGLGNSSQRKVYLPIIRAYRVGPELIDWTDGKNLRELGIYRQTGCYIERIRRNGILAHPDGDAILQEGDEIALVGFPDSHARLDPSFRNGKEVFDRNLLDLRIVEEEIVVKSDAIAGKRLSDLNLSEFGCFLNRVVRAQIEMPMDLDIVLAKGDVLQVSGEKSRVHGLAEKIGFISIHSQMADLLAFCSFFILGIMFGLVTMTFGQVSFSLGNAVGLLLSGITLGFLRANHPTFGYVPQGALNMVKDLGLMFFMVGIGLSAGGKIFEHLSQVGPQIIGLAFIVSVVPVVLAYLVGAYVLKMNSALLFGAIIGARTCAPAMDVVNEYAKSTIPALGYAGTYAIANILMTLAGTILIILS.

5 helical membrane passes run 8-28, 37-57, 66-86, 91-111, and 164-184; these read LLEQ…LAFG, LGNS…GFSF, FMLF…GIFF, HYFI…YFCS, and VGYA…AKLL. 2 RCK C-terminal domains span residues 205–292 and 293–376; these read LGNS…FRNG and KEVF…KIGF. Helical transmembrane passes span 386–406, 409–429, 450–470, 478–498, 505–525, and 539–559; these read LLAF…TMTF, VSFS…LGFL, LGLM…IFEH, IIGL…LVGA, SALL…MDVV, and AGTY…LIIL.

Belongs to the AAE transporter (TC 2.A.81) family. YbjL subfamily.

It localises to the cell membrane. This Vibrio campbellii (strain ATCC BAA-1116) protein is Putative transport protein VIBHAR_02636.